We begin with the raw amino-acid sequence, 523 residues long: Cytoplasmic dynein 1 light intermediate chain 1 (523 aa).

The segment at 1-45 (MAAVGRVGSFGSSPPGLASTYASGPLANELASGSGGPAAGDDEDG) is disordered. Residue 74–81 (GEDGAGKT) coordinates ATP. Serine 207 is modified (phosphoserine). Threonine 213 carries the phosphothreonine modification. Disordered regions lie at residues 387–434 (PPTA…DPNM) and 457–523 (GSPG…GEAS). Phosphoserine is present on residues serine 398 and serine 405. Residue threonine 408 is modified to Phosphothreonine. Residues serine 412, serine 419, serine 421, and serine 427 each carry the phosphoserine modification. Low complexity predominate over residues 412-421 (SVSSNVASVS). Over residues 458–473 (SPGGPGVGGSPGGGAA) the composition is skewed to gly residues. Low complexity predominate over residues 474–483 (GASTSLPPSA). Phosphoserine occurs at positions 486 and 510. Phosphothreonine is present on residues threonine 512 and threonine 513. Position 516 is a phosphoserine (serine 516).

It belongs to the dynein light intermediate chain family. In terms of assembly, homodimer. The cytoplasmic dynein 1 complex consists of two catalytic heavy chains (HCs) and a number of non-catalytic subunits presented by intermediate chains (ICs), light intermediate chains (LICs) and light chains (LCs); the composition seems to vary in respect to the IC, LIC and LC composition. The heavy chain homodimer serves as a scaffold for the probable homodimeric assembly of the respective non-catalytic subunits. The ICs and LICs bind directly to the HC dimer and the LCs assemble on the IC dimer. Self-associates. Interacts with DYNC1H1; DYNC1LI1 and DYNC1LI2 bind mutually exclusive to DYNC1H1. Interacts with PCNT. Forms a complex with RAB11FIP3 and RAB11A1; the interaction between DYNC1LI1 and RAB11FIP3 is direct and induces DYNC1LI1 localization onto endosomal membrane; the complex regulates endocytic trafficking. Interacts with RUFY3. Phosphorylated during mitosis but not in interphase.

The protein localises to the cytoplasm. Its subcellular location is the chromosome. The protein resides in the centromere. It localises to the kinetochore. It is found in the cytoskeleton. The protein localises to the spindle pole. Its subcellular location is the recycling endosome membrane. Its function is as follows. Acts as one of several non-catalytic accessory components of the cytoplasmic dynein 1 complex that are thought to be involved in linking dynein to cargos and to adapter proteins that regulate dynein function. Cytoplasmic dynein 1 acts as a motor for the intracellular retrograde motility of vesicles and organelles along microtubules. May play a role in binding dynein to membranous organelles or chromosomes. Probably involved in the microtubule-dependent transport of pericentrin. Is required for progress through the spindle assembly checkpoint. The phosphorylated form appears to be involved in the selective removal of MAD1L1 and MAD1L2 but not BUB1B from kinetochores. Forms a functional Rab11/RAB11FIP3/dynein complex onto endosomal membrane that regulates the movement of peripheral sorting endosomes (SE) along microtubule tracks toward the microtubule organizing center/centrosome, generating the endosomal recycling compartment (ERC). This is Cytoplasmic dynein 1 light intermediate chain 1 (Dync1li1) from Rattus norvegicus (Rat).